A 572-amino-acid polypeptide reads, in one-letter code: uncharacterized protein (572 aa).

The disordered stretch occupies residues 553–572 (PSPAPKPVTVRKKKGNSPIS). Residues 561–572 (TVRKKKGNSPIS) show a composition bias toward basic residues.

This is an uncharacterized protein from Homo sapiens (Human).